Here is a 645-residue protein sequence, read N- to C-terminus: Acetyl-coenzyme A synthetase (645 aa).

CoA-binding positions include 190-193 (RGGR) and Thr309. Residues 385–387 (GEP), 409–414 (DTWWQT), Asp498, and Arg513 contribute to the ATP site. Residue Ser521 participates in CoA binding. Arg524 serves as a coordination point for ATP. Positions 535, 537, and 540 each coordinate Mg(2+). Position 582 (Arg582) interacts with CoA. An N6-acetyllysine modification is found at Lys607.

This sequence belongs to the ATP-dependent AMP-binding enzyme family. The cofactor is Mg(2+). Acetylated. Deacetylation by the SIR2-homolog deacetylase activates the enzyme.

It catalyses the reaction acetate + ATP + CoA = acetyl-CoA + AMP + diphosphate. Its function is as follows. Catalyzes the conversion of acetate into acetyl-CoA (AcCoA), an essential intermediate at the junction of anabolic and catabolic pathways. AcsA undergoes a two-step reaction. In the first half reaction, AcsA combines acetate with ATP to form acetyl-adenylate (AcAMP) intermediate. In the second half reaction, it can then transfer the acetyl group from AcAMP to the sulfhydryl group of CoA, forming the product AcCoA. The protein is Acetyl-coenzyme A synthetase of Methylocella silvestris (strain DSM 15510 / CIP 108128 / LMG 27833 / NCIMB 13906 / BL2).